The chain runs to 117 residues: Immunoglobulin kappa variable 1-33 (117 aa).

The first 22 residues, 1–22, serve as a signal peptide directing secretion; it reads MDMRVPAQLLGLLLLWLSGARC. The segment at 23–45 is framework-1; sequence DIQMTQSPSSLSASVGDRVTITC. Residues 24–117 form the Ig-like domain; sequence IQMTQSPSSL…YYCQQYDNLP (94 aa). Cys-45 and Cys-110 are joined by a disulfide. The complementarity-determining-1 stretch occupies residues 46 to 56; it reads QASQDISNYLN. The framework-2 stretch occupies residues 57–71; the sequence is WYQQKPGKAPKLLIY. The interval 72–78 is complementarity-determining-2; sequence DASNLET. Residues 79 to 110 are framework-3; sequence GVPSRFSGSGSGTDFTFTISSLQPEDIATYYC. The segment at 111–117 is complementarity-determining-3; sequence QQYDNLP.

As to quaternary structure, immunoglobulins are composed of two identical heavy chains and two identical light chains; disulfide-linked.

The protein resides in the secreted. The protein localises to the cell membrane. Functionally, v region of the variable domain of immunoglobulin light chains that participates in the antigen recognition. Immunoglobulins, also known as antibodies, are membrane-bound or secreted glycoproteins produced by B lymphocytes. In the recognition phase of humoral immunity, the membrane-bound immunoglobulins serve as receptors which, upon binding of a specific antigen, trigger the clonal expansion and differentiation of B lymphocytes into immunoglobulins-secreting plasma cells. Secreted immunoglobulins mediate the effector phase of humoral immunity, which results in the elimination of bound antigens. The antigen binding site is formed by the variable domain of one heavy chain, together with that of its associated light chain. Thus, each immunoglobulin has two antigen binding sites with remarkable affinity for a particular antigen. The variable domains are assembled by a process called V-(D)-J rearrangement and can then be subjected to somatic hypermutations which, after exposure to antigen and selection, allow affinity maturation for a particular antigen. The polypeptide is Immunoglobulin kappa variable 1-33 (Homo sapiens (Human)).